Reading from the N-terminus, the 397-residue chain is 4-O-methyl-glucuronoyl methylesterase (397 aa).

The N-terminal stretch at 1-18 (MVHLTSALLVAGAAFAAA) is a signal peptide. Disulfide bonds link cysteine 31/cysteine 65, cysteine 212/cysteine 347, and cysteine 244/cysteine 319. Positions 211–216 (GCSRNG) match the GXSYXG catalytic site motif motif. The active-site Nucleophile is serine 213. Residues lysine 217, glutamine 259, glutamate 267, and tryptophan 310 each contribute to the substrate site. Histidine 346 acts as the Proton donor/acceptor in catalysis.

This sequence belongs to the carbohydrate esterase 15 (CE15) family.

It is found in the secreted. The catalysed reaction is a 4-O-methyl-alpha-D-glucuronosyl ester derivative + H2O = 4-O-methyl-alpha-D-glucuronate derivative + an alcohol + H(+). In terms of biological role, glucuronoyl esterase which may play a significant role in biomass degradation, as it is considered to disconnect hemicellulose from lignin through the hydrolysis of the ester bond between 4-O-methyl-D-glucuronic acid residues of glucuronoxylans and aromatic alcohols of lignin. The protein is 4-O-methyl-glucuronoyl methylesterase (ge2) of Thermothelomyces thermophilus (strain ATCC 42464 / BCRC 31852 / DSM 1799) (Sporotrichum thermophile).